Reading from the N-terminus, the 274-residue chain is MTQPAVYVVSDSTGETAELVTRAALSQFGQTPKFIHRFHHVDSSHMIEEIVDLVAVNNGIIVHTIVLESVREELNKTAQAFGVPIIDLFGPLLNQLEETYKIKPLSEPGRVRSMDEAYFNKVAAIEFAVENDDGRNPRGILQADYVLIGISRTSKTPLSQYLALKGLKIVNIPIVPEAQIPDELFEIDPKKIIGLKISKQKLTKIRQERLISIGLPGAGTYASNQRIDEELAIFNKLASKLNCFVLDVTNKAIEETANEILIHIGEIVDENLEL.

149-156 (GISRTSKT) is an ADP binding site.

It belongs to the pyruvate, phosphate/water dikinase regulatory protein family. PDRP subfamily.

The catalysed reaction is N(tele)-phospho-L-histidyl/L-threonyl-[pyruvate, phosphate dikinase] + ADP = N(tele)-phospho-L-histidyl/O-phospho-L-threonyl-[pyruvate, phosphate dikinase] + AMP + H(+). The enzyme catalyses N(tele)-phospho-L-histidyl/O-phospho-L-threonyl-[pyruvate, phosphate dikinase] + phosphate + H(+) = N(tele)-phospho-L-histidyl/L-threonyl-[pyruvate, phosphate dikinase] + diphosphate. In terms of biological role, bifunctional serine/threonine kinase and phosphorylase involved in the regulation of the pyruvate, phosphate dikinase (PPDK) by catalyzing its phosphorylation/dephosphorylation. In Listeria monocytogenes serotype 4b (strain F2365), this protein is Putative pyruvate, phosphate dikinase regulatory protein 1.